Reading from the N-terminus, the 175-residue chain is 6,7-dimethyl-8-ribityllumazine synthase (175 aa).

5-amino-6-(D-ribitylamino)uracil is bound by residues phenylalanine 24, 58–60 (ALE), and 82–84 (AVI). Residue 87–88 (ET) coordinates (2S)-2-hydroxy-3-oxobutyl phosphate. The active-site Proton donor is histidine 90. Residue asparagine 115 coordinates 5-amino-6-(D-ribitylamino)uracil. Arginine 129 is a binding site for (2S)-2-hydroxy-3-oxobutyl phosphate. Residues 151-175 (LEPEEDDEDEDEEDEDFDDEETDRR) form a disordered region. A compositionally biased stretch (acidic residues) spans 152–175 (EPEEDDEDEDEEDEDFDDEETDRR).

This sequence belongs to the DMRL synthase family.

It catalyses the reaction (2S)-2-hydroxy-3-oxobutyl phosphate + 5-amino-6-(D-ribitylamino)uracil = 6,7-dimethyl-8-(1-D-ribityl)lumazine + phosphate + 2 H2O + H(+). The protein operates within cofactor biosynthesis; riboflavin biosynthesis; riboflavin from 2-hydroxy-3-oxobutyl phosphate and 5-amino-6-(D-ribitylamino)uracil: step 1/2. In terms of biological role, catalyzes the formation of 6,7-dimethyl-8-ribityllumazine by condensation of 5-amino-6-(D-ribitylamino)uracil with 3,4-dihydroxy-2-butanone 4-phosphate. This is the penultimate step in the biosynthesis of riboflavin. This Bordetella petrii (strain ATCC BAA-461 / DSM 12804 / CCUG 43448) protein is 6,7-dimethyl-8-ribityllumazine synthase.